Consider the following 481-residue polypeptide: RAC-beta serine/threonine-protein kinase (481 aa).

Met1 is modified (N-acetylmethionine). Residues 5-108 (SVIKEGWLHK…WMRAIQMVAN (104 aa)) enclose the PH domain. Residue Ser34 is modified to Phosphoserine. The cysteines at positions 60 and 77 are disulfide-linked. Ser126 carries the post-translational modification Phosphoserine. O-linked (GlcNAc) serine glycosylation is found at Ser128 and Ser131. In terms of domain architecture, Protein kinase spans 152–409 (FDYLKLLGKG…AKEVMEHRFF (258 aa)). ATP-binding positions include 158–166 (LGKGTFGKV) and Lys181. Asp275 (proton acceptor) is an active-site residue. Mn(2+)-binding residues include Asn280 and Asp293. An intrachain disulfide couples Cys297 to Cys311. Thr306 is a glycosylation site (O-linked (GlcNAc) threonine). Thr309 is subject to Phosphothreonine; by PDPK1. Residue Thr313 is glycosylated (O-linked (GlcNAc) threonine). Residues 410–481 (LSINWQDVVQ…QFSYSASIRE (72 aa)) enclose the AGC-kinase C-terminal domain. A Phosphoserine modification is found at Ser447. Phosphothreonine is present on Thr451. Residues Ser474 and Ser478 each carry the phosphoserine modification. A glycan (O-linked (GlcNAc) serine; alternate) is linked at Ser474.

It belongs to the protein kinase superfamily. AGC Ser/Thr protein kinase family. RAC subfamily. As to quaternary structure, interacts with BTBD10. Interacts with KCTD20. Interacts (via PH domain) with MTCP1, TCL1A and TCL1B; this interaction may facilitate AKT2 oligomerization and phosphorylation, hence increasing kinase activity. Interacts with PHB2; this interaction may be important for myogenic differentiation. Interacts (when phosphorylated) with CLIP3/ClipR-59; this interaction promotes AKT2 recruitment to the plasma membrane. Interacts with WDFY2/ProF (via WD repeats 1-3). Phosphorylation on Thr-309 and Ser-474 is required for full activity. Phosphorylation of the activation loop at Thr-309 by PDPK1/PDK1 is a prerequisite for full activation. Phosphorylated and activated by PDPK1/PDK1 in the presence of phosphatidylinositol 3,4,5-trisphosphate. Phosphorylation by mTORC2 in response to growth factors plays a key role in AKT1 activation: mTORC2 phosphorylates different sites depending on the context, such as Ser-474 or Ser-478, thereby facilitating subsequent phosphorylation of the activation loop by PDPK1/PDK1. In terms of processing, ubiquitinated; undergoes both 'Lys-48'- and 'Lys-63'-linked polyubiquitination. TRAF6 catalyzes 'Lys-63'-linked AKT2 ubiquitination; this modification may be important for AKT2 recruitment to the plasma membrane and for AKT2 activating phosphorylation. When phosphorylated, undergoes 'Lys-48'-polyubiquitination catalyzed by TTC3 in the nucleus, leading to its degradation by the proteasome. Post-translationally, O-GlcNAcylation at Thr-306 and Thr-313 inhibits activating phosphorylation at Thr-309 via the disruption of the interaction between AKT and PDPK1/PDK1. As to expression, widely expressed. Expressed in myoblasts.

It localises to the cytoplasm. Its subcellular location is the nucleus. The protein localises to the cell membrane. It is found in the early endosome. The enzyme catalyses L-seryl-[protein] + ATP = O-phospho-L-seryl-[protein] + ADP + H(+). It catalyses the reaction L-threonyl-[protein] + ATP = O-phospho-L-threonyl-[protein] + ADP + H(+). Phosphorylation at Thr-309 (in the kinase domain) and Ser-474 (in the C-terminal regulatory region) is required for full activation. In adipocytes and hepatocytes, the activation is induced by insulin. Aminofurazans, such as 4-[2-(4-amino-2,5-dihydro-1,2,5-oxadiazol-3-yl)-6-{[(1S)-3-amino-1-phenylpropyl]oxy}-1-ethyl-1H-imidazo[4,5-c]pyridin-4-yl]-2-methylbut-3-yn-2-ol (compound 32), are potent AKT2 inhibitors. AKT2 phosphorylation of PKP1 is induced by insulin. In terms of biological role, serine/threonine kinase closely related to AKT1 and AKT3. All 3 enzymes, AKT1, AKT2 and AKT3, are collectively known as AKT kinase. AKT regulates many processes including metabolism, proliferation, cell survival, growth and angiogenesis, through the phosphorylation of a range of downstream substrates. Over 100 substrates have been reported so far, although for most of them, the precise AKT kinase catalyzing the reaction was not specified. AKT regulates glucose uptake by mediating insulin-induced translocation of the SLC2A4/GLUT4 glucose transporter to the cell surface. Phosphorylation of PTPN1 at 'Ser-50' negatively modulates its phosphatase activity preventing dephosphorylation of the insulin receptor and the attenuation of insulin signaling. Phosphorylation of TBC1D4 triggers the binding of this effector to inhibitory 14-3-3 proteins, which is required for insulin-stimulated glucose transport. AKT also regulates the storage of glucose in the form of glycogen by phosphorylating GSK3A at 'Ser-21' and GSK3B at 'Ser-9', resulting in inhibition of its kinase activity. Phosphorylation of GSK3 isoforms by AKT is also thought to be one mechanism by which cell proliferation is driven. AKT also regulates cell survival via the phosphorylation of MAP3K5 (apoptosis signal-related kinase). Phosphorylation of 'Ser-83' decreases MAP3K5 kinase activity stimulated by oxidative stress and thereby prevents apoptosis. AKT mediates insulin-stimulated protein synthesis by phosphorylating TSC2 at 'Ser-939' and 'Thr-1462', thereby activating mTORC1 signaling and leading to both phosphorylation of 4E-BP1 and in activation of RPS6KB1. AKT is involved in the phosphorylation of members of the FOXO factors (Forkhead family of transcription factors), leading to binding of 14-3-3 proteins and cytoplasmic localization. In particular, FOXO1 is phosphorylated at 'Thr-24', 'Ser-256' and 'Ser-319'. FOXO3 and FOXO4 are phosphorylated on equivalent sites. AKT has an important role in the regulation of NF-kappa-B-dependent gene transcription and positively regulates the activity of CREB1 (cyclic AMP (cAMP)-response element binding protein). The phosphorylation of CREB1 induces the binding of accessory proteins that are necessary for the transcription of pro-survival genes such as BCL2 and MCL1. AKT phosphorylates 'Ser-454' on ATP citrate lyase (ACLY), thereby potentially regulating ACLY activity and fatty acid synthesis. Activates the 3B isoform of cyclic nucleotide phosphodiesterase (PDE3B) via phosphorylation of 'Ser-273', resulting in reduced cyclic AMP levels and inhibition of lipolysis. Phosphorylates PIKFYVE on 'Ser-318', which results in increased PI(3)P-5 activity. The Rho GTPase-activating protein DLC1 is another substrate and its phosphorylation is implicated in the regulation cell proliferation and cell growth. AKT plays a role as key modulator of the AKT-mTOR signaling pathway controlling the tempo of the process of newborn neurons integration during adult neurogenesis, including correct neuron positioning, dendritic development and synapse formation. Signals downstream of phosphatidylinositol 3-kinase (PI(3)K) to mediate the effects of various growth factors such as platelet-derived growth factor (PDGF), epidermal growth factor (EGF), insulin and insulin-like growth factor 1 (IGF1). AKT mediates the antiapoptotic effects of IGF1. Essential for the SPATA13-mediated regulation of cell migration and adhesion assembly and disassembly. May be involved in the regulation of the placental development. In response to lysophosphatidic acid stimulation, inhibits the ciliogenesis cascade. In this context, phosphorylates WDR44, hence stabilizing its interaction with Rab11 and preventing the formation of the ciliogenic Rab11-FIP3-RAB3IP complex. Also phosphorylates RAB3IP/Rabin8, thus may affect RAB3IP guanine nucleotide exchange factor (GEF) activity toward Rab8, which is important for cilia growth. Phosphorylates PKP1, facilitating its interaction with YWHAG and translocation to the nucleus, ultimately resulting in a reduction in keratinocyte intercellular adhesion. Phosphorylation of PKP1 increases PKP1 protein stability, translocation to the cytoplasm away from desmosome plaques and PKP1-driven cap-dependent translation. Its function is as follows. Several AKT2-specific substrates have been identified, including ANKRD2, C2CD5, CLK2 and PITX2. May play a role in myoblast differentiation. In this context, may act through PITX2 phosphorylation. Unphosphorylated PITX2 associates with an ELAVL1/HuR-containing complex, which stabilizes CCND1 cyclin mRNA, ensuring cell proliferation. Phosphorylation by AKT2 impairs this association, leading to CCND1 mRNA destabilization and progression towards differentiation. Also involved in the negative regulation of myogenesis in response to stress conditions. In this context, acts by phosphorylating ANKRD2. May also be a key regulator of glucose uptake. Regulates insulin-stimulated glucose transport by the increase of glucose transporter GLUT4 translocation from intracellular stores to the plasma membrane. In this context, acts by phosphorylating C2CD5/CDP138 on 'Ser-197' in insulin-stimulated adipocytes. Through the phosphorylation of CLK2 on 'Thr-343', involved in insulin-regulated suppression of hepatic gluconeogenesis. The polypeptide is RAC-beta serine/threonine-protein kinase (Homo sapiens (Human)).